A 433-amino-acid chain; its full sequence is MSSRKTKSNAHAECLSQVQRILRERFCHHSPHSNLFGVQVQYKHLIELLKRTAIYGESNSVLIVGPRGSGKTTLLNHALKELMEIEVSENVIQVHLNGLLQTNEKIALKEITRQLNLDNVVEDKVFGSFAENLSFLLEALQKGDRTSSCPVIFILDEFDIFAHQKNQTLLYNLFDISQSAQTPVAVIGLTCRLDILELLEKRVKSRFSHRQIHLMNSFDFPQYLKIFKEQLSLPAEFPDKAFAERWNENVHCLSEDSTVLEVLQKHFSVNKNLQSLHMLLMLALNRVTVSHPFMTSADLMEAQHMCSLDSKANIVHGLSVLEICLIIAMKHLNDIYEEEPFNFQMVYNEFQKFIQRKAHSVYNFEKPVVMKAFEHLQQLELIKPVERTSVNSQREYQLVKLLLDNTQIMNALQKYSNCPTDVRQWATSSLSWL.

Lys-7 is subject to N6-methyllysine. ATP is bound at residue 65–72; the sequence is GPRGSGKT.

It belongs to the ORC4 family. In terms of assembly, component of ORC, a complex composed of at least 6 subunits: ORC1, ORC2, ORC3, ORC4, ORC5 and ORC6. ORC is regulated in a cell-cycle dependent manner. It is sequentially assembled at the exit from anaphase of mitosis and disassembled as cells enter S phase. Interacts with DBF4. Interacts with POLQ.

It is found in the nucleus. Functionally, binds histone H3 and H4 trimethylation marks H3K9me3, H3K27me3 and H4K20me3. Component of the origin recognition complex (ORC) that binds origins of replication. DNA-binding is ATP-dependent. The specific DNA sequences that define origins of replication have not been identified yet. ORC is required to assemble the pre-replication complex necessary to initiate DNA replication. In Mus musculus (Mouse), this protein is Origin recognition complex subunit 4 (Orc4).